The primary structure comprises 102 residues: Small ribosomal subunit protein uS10 (102 aa).

It belongs to the universal ribosomal protein uS10 family. Part of the 30S ribosomal subunit.

In terms of biological role, involved in the binding of tRNA to the ribosomes. This is Small ribosomal subunit protein uS10 from Bacillus cereus (strain G9842).